Reading from the N-terminus, the 293-residue chain is Ribosomal RNA small subunit methyltransferase A (293 aa).

Residues asparagine 29, leucine 31, glycine 56, glutamate 77, aspartate 102, and asparagine 127 each coordinate S-adenosyl-L-methionine.

It belongs to the class I-like SAM-binding methyltransferase superfamily. rRNA adenine N(6)-methyltransferase family. RsmA subfamily.

Its subcellular location is the cytoplasm. It carries out the reaction adenosine(1518)/adenosine(1519) in 16S rRNA + 4 S-adenosyl-L-methionine = N(6)-dimethyladenosine(1518)/N(6)-dimethyladenosine(1519) in 16S rRNA + 4 S-adenosyl-L-homocysteine + 4 H(+). Its function is as follows. Specifically dimethylates two adjacent adenosines (A1518 and A1519) in the loop of a conserved hairpin near the 3'-end of 16S rRNA in the 30S particle. May play a critical role in biogenesis of 30S subunits. In Geobacillus thermodenitrificans (strain NG80-2), this protein is Ribosomal RNA small subunit methyltransferase A.